The following is a 343-amino-acid chain: N-acetyl-gamma-glutamyl-phosphate reductase (343 aa).

The active site involves C147.

Belongs to the NAGSA dehydrogenase family. Type 1 subfamily.

The protein resides in the cytoplasm. The catalysed reaction is N-acetyl-L-glutamate 5-semialdehyde + phosphate + NADP(+) = N-acetyl-L-glutamyl 5-phosphate + NADPH + H(+). Its pathway is amino-acid biosynthesis; L-arginine biosynthesis; N(2)-acetyl-L-ornithine from L-glutamate: step 3/4. In terms of biological role, catalyzes the NADPH-dependent reduction of N-acetyl-5-glutamyl phosphate to yield N-acetyl-L-glutamate 5-semialdehyde. In Listeria monocytogenes serotype 4b (strain F2365), this protein is N-acetyl-gamma-glutamyl-phosphate reductase.